The primary structure comprises 77 residues: Large ribosomal subunit protein uL29 (77 aa).

This sequence belongs to the universal ribosomal protein uL29 family.

This chain is Large ribosomal subunit protein uL29, found in Methanopyrus kandleri (strain AV19 / DSM 6324 / JCM 9639 / NBRC 100938).